We begin with the raw amino-acid sequence, 146 residues long: uncharacterized protein (146 aa).

Residues 7–146 (LEINYKTDEL…EGHDVLLWKP (140 aa)) enclose the N-acetyltransferase domain.

This is an uncharacterized protein from Staphylococcus aureus (strain COL).